The chain runs to 61 residues: Conotoxin Vn5.3 (61 aa).

The signal sequence occupies residues Met-1–Gly-19. The propeptide occupies Val-20 to Arg-50.

It belongs to the conotoxin T superfamily. Contains 2 disulfide bonds that can be either 'C1-C3, C2-C4' or 'C1-C4, C2-C3', since these disulfide connectivities have been observed for conotoxins with cysteine framework V (for examples, see AC P0DQQ7 and AC P81755). Expressed by the venom duct.

Its subcellular location is the secreted. The polypeptide is Conotoxin Vn5.3 (Conus ventricosus (Mediterranean cone)).